Consider the following 131-residue polypeptide: Neurophysin 2 (131 aa).

Disulfide bonds link C10/C55, C13/C27, C21/C45, C28/C35, C62/C74, C68/C86, and C75/C80.

The protein belongs to the vasopressin/oxytocin family.

Its subcellular location is the secreted. In terms of biological role, neurophysin 2 specifically binds vasopressin. The polypeptide is Neurophysin 2 (Anser anser anser (Western greylag goose)).